The sequence spans 421 residues: Histidine--tRNA ligase (421 aa).

Belongs to the class-II aminoacyl-tRNA synthetase family. In terms of assembly, homodimer.

The protein resides in the cytoplasm. The enzyme catalyses tRNA(His) + L-histidine + ATP = L-histidyl-tRNA(His) + AMP + diphosphate + H(+). The protein is Histidine--tRNA ligase of Fervidobacterium nodosum (strain ATCC 35602 / DSM 5306 / Rt17-B1).